The chain runs to 123 residues: UPF0426 protein At1g28150, chloroplastic (123 aa).

Residues 1–26 constitute a chloroplast transit peptide; sequence MGFVLICTCPPSSGVVVSQLHHHQFS. The tract at residues 97 to 123 is disordered; sequence SGITEEEVDADGVVSNDEDSPQQIEIE. Residues 100-123 show a composition bias toward acidic residues; sequence TEEEVDADGVVSNDEDSPQQIEIE.

Belongs to the UPF0426 family.

The protein resides in the plastid. It localises to the chloroplast. The protein localises to the plastoglobule. The sequence is that of UPF0426 protein At1g28150, chloroplastic from Arabidopsis thaliana (Mouse-ear cress).